The following is a 905-amino-acid chain: DNA gyrase subunit A (905 aa).

Residues Ile-35–Leu-524 form the Topo IIA-type catalytic domain. The active-site O-(5'-phospho-DNA)-tyrosine intermediate is the Tyr-123. Residues Gln-551 to Gly-557 carry the GyrA-box motif.

It belongs to the type II topoisomerase GyrA/ParC subunit family. Heterotetramer, composed of two GyrA and two GyrB chains. In the heterotetramer, GyrA contains the active site tyrosine that forms a transient covalent intermediate with DNA, while GyrB binds cofactors and catalyzes ATP hydrolysis.

Its subcellular location is the cytoplasm. It carries out the reaction ATP-dependent breakage, passage and rejoining of double-stranded DNA.. Its function is as follows. A type II topoisomerase that negatively supercoils closed circular double-stranded (ds) DNA in an ATP-dependent manner to modulate DNA topology and maintain chromosomes in an underwound state. Negative supercoiling favors strand separation, and DNA replication, transcription, recombination and repair, all of which involve strand separation. Also able to catalyze the interconversion of other topological isomers of dsDNA rings, including catenanes and knotted rings. Type II topoisomerases break and join 2 DNA strands simultaneously in an ATP-dependent manner. The polypeptide is DNA gyrase subunit A (Rickettsia prowazekii (strain Madrid E)).